Reading from the N-terminus, the 1691-residue chain is Collagen alpha-6(IV) chain (1691 aa).

Positions 1 to 22 are cleaved as a signal peptide; sequence MLINKLWLLLVTLCLTEELAAA. A 7S domain region spans residues 23–46; sequence GEKSYGKPCGGQDCSGSCQCFPEK. The interval 47–1463 is triple-helical region; sequence GARGRPGPIG…FGMPGMPGQS (1417 aa). Disordered stretches follow at residues 108–338, 404–473, 486–881, 915–1099, and 1185–1459; these read IPGH…EGQK, GFPG…LGLK, GGVP…KGSP, GIPG…KGRD, and THGT…MPGM. The N-linked (GlcNAc...) asparagine glycan is linked to asparagine 127. Over residues 185 to 197 the composition is skewed to low complexity; that stretch reads PQGAPGFPGAVGP. Over residues 198–213 the composition is skewed to pro residues; it reads AGPPGLQGPPGPPGPL. Low complexity-rich tracts occupy residues 311-320 and 421-431; these read QGPPGQQGKK and GAAGLPGRDGL. 2 stretches are compositionally biased toward pro residues: residues 432–443 and 491–502; these read PGPPGPPGPPSP and TGPPGEPGPPGP. Positions 503–512 are enriched in low complexity; sequence WGLIGLPGLK. A Cell attachment site motif is present at residues 515-517; the sequence is RGD. Residues 526 to 541 show a composition bias toward low complexity; it reads PAGAPGLVGPLGPSGP. Positions 560–562 match the Cell attachment site motif; that stretch reads RGD. The span at 588-599 shows a compositional bias: gly residues; that stretch reads GLPGDGGQGFPG. 4 stretches are compositionally biased toward low complexity: residues 641–652, 660–703, 722–735, and 802–820; these read LPGQQGLPGSKG, PGSY…GSPG, LPGFPGLPGKDGLP, and SPGTPGQVGQPGTPGSSGP. The segment covering 842–851 has biased composition (basic residues); the sequence is PGKKGTRGKK. Positions 853–878 are enriched in low complexity; sequence PPGSIVKKGLPGLKGLPGNPGLVGLK. Residues 986–988 carry the Cell attachment site motif; the sequence is RGD. Positions 1055-1068 are enriched in low complexity; it reads SPGLPGASGLPGLK. Residues 1210 to 1220 are compositionally biased toward gly residues; it reads GYPGIGIGAPG. A compositionally biased stretch (low complexity) spans 1234-1253; sequence PGLQGPAGLPGAPGISLPSL. Positions 1275–1284 are enriched in pro residues; sequence PAGPPGPPGP. Positions 1360 to 1371 are enriched in polar residues; sequence SGLQGDPGQTPT. Low complexity-rich tracts occupy residues 1384 to 1397 and 1429 to 1459; these read LPGIDGIPGLTGDP and ALGDPGLPGLQGPPGFEGAPGQQGPFGMPGM. In terms of domain architecture, Collagen IV NC1 spans 1467 to 1691; that stretch reads GYTLVKHSQS…SRCQVCMKSL (225 aa). Disulfide bonds link cysteine 1482–cysteine 1571, cysteine 1515–cysteine 1568, cysteine 1527–cysteine 1533, cysteine 1590–cysteine 1687, cysteine 1624–cysteine 1684, and cysteine 1636–cysteine 1643.

It belongs to the type IV collagen family. There are six type IV collagen isoforms, alpha 1(IV)-alpha 6(IV), each of which can form a triple helix structure with 2 other chains to generate type IV collagen network. Prolines at the third position of the tripeptide repeating unit (G-X-Y) are hydroxylated in some or all of the chains. Post-translationally, type IV collagens contain numerous cysteine residues which are involved in inter- and intramolecular disulfide bonding. 12 of these, located in the NC1 domain, are conserved in all known type IV collagens. In terms of processing, the trimeric structure of the NC1 domains is stabilized by covalent bonds between Lys and Met residues.

Its subcellular location is the secreted. It is found in the extracellular space. The protein resides in the extracellular matrix. The protein localises to the basement membrane. Type IV collagen is the major structural component of glomerular basement membranes (GBM), forming a 'chicken-wire' meshwork together with laminins, proteoglycans and entactin/nidogen. The polypeptide is Collagen alpha-6(IV) chain (COL4A6) (Homo sapiens (Human)).